Consider the following 405-residue polypeptide: LanC-like protein GCL2 (405 aa).

Zn(2+) is bound by residues C278, C323, and H324.

It belongs to the LanC-like protein family.

Its function is as follows. May play a role in signaling. May be not involved in abscisic acid (ABA) signaling. The chain is LanC-like protein GCL2 (GCL2) from Arabidopsis thaliana (Mouse-ear cress).